Reading from the N-terminus, the 829-residue chain is Telomere length regulation protein TEL2 homolog (829 aa).

2 disordered regions span residues 446–493 and 620–641; these read SADF…DDLV and SEKP…PHSI. The segment covering 456–466 has biased composition (low complexity); that stretch reads SSPSKSPLSSP. The span at 467 to 480 shows a compositional bias: basic and acidic residues; the sequence is EVREKSKVKVKADQ. Residues 482–493 are compositionally biased toward acidic residues; that stretch reads SDSDLDSDDDLV. Over residues 629–641 the composition is skewed to polar residues; sequence AESGSVNTDPHSI.

This sequence belongs to the TEL2 family.

It localises to the cytoplasm. Its subcellular location is the membrane. The protein resides in the nucleus. The protein localises to the chromosome. It is found in the telomere. In terms of biological role, regulator of the DNA damage response (DDR). Part of the TTT complex that is required to stabilize protein levels of the phosphatidylinositol 3-kinase-related protein kinase (PIKK) family proteins. Promotes assembly, stabilizes and maintains the activity of TORC complexes, which regulate cell growth and survival in response to nutrient and hormonal signals. May be involved in telomere length regulation. The protein is Telomere length regulation protein TEL2 homolog (telo2) of Xenopus tropicalis (Western clawed frog).